The primary structure comprises 678 residues: Serine/threonine-protein kinase mph1 (678 aa).

Disordered stretches follow at residues Lys-39 to Leu-93 and Leu-114 to Val-209. Composition is skewed to polar residues over residues Asp-41–Ala-66 and Leu-114–Ser-125. The 292-residue stretch at Phe-316–Pro-607 folds into the Protein kinase domain. Residues Val-322 to Val-330 and Lys-345 each bind ATP. Asp-442 (proton acceptor) is an active-site residue.

This sequence belongs to the protein kinase superfamily. Ser/Thr protein kinase family.

The enzyme catalyses L-seryl-[protein] + ATP = O-phospho-L-seryl-[protein] + ADP + H(+). The catalysed reaction is L-threonyl-[protein] + ATP = O-phospho-L-threonyl-[protein] + ADP + H(+). It catalyses the reaction L-tyrosyl-[protein] + ATP = O-phospho-L-tyrosyl-[protein] + ADP + H(+). In terms of biological role, involved in mitotic spindle assembly checkpoint signaling, a process that delays anaphase until chromosomes are bioriented on the spindle, and in the repair of incorrect mitotic kinetochore-spindle microtubule attachments. Phosphorylates spc7/knl1 on MELT motifs; phosphorylation is required for recruitment of the BUB1-BUB3 complex to kinetochores. This chain is Serine/threonine-protein kinase mph1, found in Schizosaccharomyces pombe (strain 972 / ATCC 24843) (Fission yeast).